A 37-amino-acid chain; its full sequence is MLRAIVVFAPIIAAVAWVVFNIQKPAREQWDRQFGEK.

A helical membrane pass occupies residues 4–22; it reads AIVVFAPIIAAVAWVVFNI.

The protein belongs to the PsbY family. As to quaternary structure, PSII is composed of 1 copy each of membrane proteins PsbA, PsbB, PsbC, PsbD, PsbE, PsbF, PsbH, PsbI, PsbJ, PsbK, PsbL, PsbM, PsbT, PsbX, PsbY, Psb30/Ycf12, peripheral proteins PsbO, CyanoQ (PsbQ), PsbU, PsbV and a large number of cofactors. It forms dimeric complexes.

It is found in the cellular thylakoid membrane. Its function is as follows. Loosely associated component of the core of photosystem II (PSII), it is not always seen in crystals. PSII is a light-driven water plastoquinone oxidoreductase, using light energy to abstract electrons from H(2)O, generating a proton gradient subsequently used for ATP formation. The sequence is that of Photosystem II reaction center protein Y from Prochlorococcus marinus (strain MIT 9312).